A 526-amino-acid polypeptide reads, in one-letter code: Beta,beta-carotene 15,15'-dioxygenase (526 aa).

Positions 172, 236, 307, and 512 each coordinate Fe cation.

Belongs to the carotenoid oxygenase family. It depends on Fe(2+) as a cofactor.

It localises to the cytoplasm. The protein localises to the cytosol. The enzyme catalyses all-trans-beta-carotene + O2 = 2 all-trans-retinal. It functions in the pathway cofactor metabolism; retinol metabolism. Symmetrically cleaves beta-carotene into two molecules of retinal using a dioxygenase mechanism. This is Beta,beta-carotene 15,15'-dioxygenase from Gallus gallus (Chicken).